We begin with the raw amino-acid sequence, 321 residues long: MNQVNFLNLDKNILIITSGGDAPGMNASLISLIHRLMNNNFNVFIGIEGLLGLYNNLIEPIKDKRVFDVYFNEQGTVIKTSRFIKLDINDKKTQIIKDNLLSHNIQKIIILGGQGSMQAGLVLTKMGFEVFGILHTIDNDFSETQMCIGALSAASFNQKLLKCLNYTAKAHCAFNLVELMGRECSWLVNNSVGKLKPILMLTNQDNKYTVDEVIDLIKDKINSIKEYDPLIIVQELIYDQKWYELLVKTFEQKLHKSLRITILNYLQRGAPVSDFDLQLAKDSANVLVDFIVNQNDIKNTNNMYVVINKFDNKLEVIKFNK.

Residues glycine 20 and 82-83 (RF) each bind ATP. Residues 136-138 (TID), 180-182 (MGR), glutamate 235, arginine 259, and 265-268 (YLQR) contribute to the substrate site. The Proton acceptor role is filled by aspartate 138.

The protein belongs to the phosphofructokinase type A (PFKA) family. In terms of assembly, homotetramer. Requires Mg(2+) as cofactor.

Its subcellular location is the cytoplasm. It catalyses the reaction beta-D-fructose 6-phosphate + ATP = beta-D-fructose 1,6-bisphosphate + ADP + H(+). Its pathway is carbohydrate degradation; glycolysis; D-glyceraldehyde 3-phosphate and glycerone phosphate from D-glucose: step 3/4. Functionally, catalyzes the phosphorylation of D-fructose 6-phosphate to fructose 1,6-bisphosphate by ATP, the first committing step of glycolysis. The chain is Probable ATP-dependent 6-phosphofructokinase (pfkA) from Ureaplasma parvum serovar 3 (strain ATCC 700970).